The primary structure comprises 92 residues: Elongation factor 1-beta (92 aa).

This sequence belongs to the EF-1-beta/EF-1-delta family.

In terms of biological role, promotes the exchange of GDP for GTP in EF-1-alpha/GDP, thus allowing the regeneration of EF-1-alpha/GTP that could then be used to form the ternary complex EF-1-alpha/GTP/AAtRNA. In Korarchaeum cryptofilum (strain OPF8), this protein is Elongation factor 1-beta.